The primary structure comprises 393 residues: Dual specificity mitogen-activated protein kinase kinase 1 (393 aa).

The interval Met-1–Glu-27 is disordered. The Protein kinase domain maps to Phe-68–Ile-361. Residues Leu-74–Val-82 and Lys-97 contribute to the ATP site. Catalysis depends on Asp-190, which acts as the Proton acceptor. Phosphoserine; by RAF occurs at positions 218 and 222. Residues Glu-270 to Pro-307 form an RAF1-binding region. The residue at position 286 (Thr-286) is a Phosphothreonine. At Thr-292 the chain carries Phosphothreonine; by MAPK1. At Ser-298 the chain carries Phosphoserine; by PAK.

The protein belongs to the protein kinase superfamily. STE Ser/Thr protein kinase family. MAP kinase kinase subfamily. In terms of assembly, found in a complex with at least BRAF, HRAS, MAP2K1, MAPK3/ERK1 and RGS14. Forms a heterodimer with MAP2K2/MEK2. Forms heterodimers with KSR2 which further dimerize to form tetramers. Interacts with KSR1 or KSR2 and BRAF; the interaction with KSR1 or KSR2 mediates KSR1-BRAF or KSR2-BRAF dimerization. Interacts with ARBB2, LAMTOR3, MAPK1/ERK2 and RAF1. Interacts with MAPK1/ERK2. Interacts with MORG1. Interacts with PPARG. Interacts with isoform 1 of VRK2. Interacts with SGK1. Interacts with BIRC6/bruce. Interacts with KAT7; the interaction promotes KAT7 phosphorylation. Interacts with RAF1 and NEK10; the interaction is required for ERK1/2-signaling pathway activation in response to UV irradiation. Interacts with TRAF3IP3. Interacts with MOS. In terms of processing, phosphorylation at Ser-218 and Ser-222 by MAP kinase kinase kinases (BRAF or MEKK1) positively regulates the kinase activity. Also phosphorylated at Thr-292 by MAPK1/ERK2 and at Ser-298 by PAK. MAPK1/ERK2 phosphorylation of Thr-292 occurs in response to cellular adhesion and leads to inhibition of Ser-298 phosphorylation by PAK. Autophosphorylated at Ser-218 and Ser-222, autophosphosphorylation is promoted by NEK10 following UV irradiation.

The protein resides in the cytoplasm. It is found in the cytoskeleton. The protein localises to the microtubule organizing center. It localises to the centrosome. Its subcellular location is the spindle pole body. The protein resides in the nucleus. It is found in the membrane. It carries out the reaction L-seryl-[protein] + ATP = O-phospho-L-seryl-[protein] + ADP + H(+). The enzyme catalyses L-threonyl-[protein] + ATP = O-phospho-L-threonyl-[protein] + ADP + H(+). It catalyses the reaction L-tyrosyl-[protein] + ATP = O-phospho-L-tyrosyl-[protein] + ADP + H(+). Ras proteins such as HRAS mediate the activation of RAF proteins such as RAF1 or BRAF which in turn activate extracellular signal-regulated kinases (ERK) through MAPK (mitogen-activated protein kinases) and ERK kinases MAP2K1/MEK1 and MAP2K2/MEK2. Activation occurs through phosphorylation of Ser-218 and Ser-222. MAP2K1/MEK1 binds KSR1 or KSR2 releasing the inhibitory intramolecular interaction between KSR1 or KSR2 protein kinase and N-terminal domains. This allows KSR1 or KSR2 dimerization with BRAF leading to BRAF activation and phosphorylation of MAP2K1. MAP2K1/MEK1 is also the target of negative feed-back regulation by its substrate kinases, such as MAPK1/ERK2. These phosphorylate MAP2K1/MEK1 on Thr-292, thereby facilitating dephosphorylation of the activating residues Ser-218 and Ser-222. Inhibited by serine/threonine phosphatase 2A. Functionally, dual specificity protein kinase which acts as an essential component of the MAP kinase signal transduction pathway. Binding of extracellular ligands such as growth factors, cytokines and hormones to their cell-surface receptors activates RAS and this initiates RAF1 activation. RAF1 then further activates the dual-specificity protein kinases MAP2K1/MEK1 and MAP2K2/MEK2. Both MAP2K1/MEK1 and MAP2K2/MEK2 function specifically in the MAPK/ERK cascade, and catalyze the concomitant phosphorylation of a threonine and a tyrosine residue in a Thr-Glu-Tyr sequence located in the extracellular signal-regulated kinases MAPK3/ERK1 and MAPK1/ERK2, leading to their activation and further transduction of the signal within the MAPK/ERK cascade. Activates BRAF in a KSR1 or KSR2-dependent manner; by binding to KSR1 or KSR2 releases the inhibitory intramolecular interaction between KSR1 or KSR2 protein kinase and N-terminal domains which promotes KSR1 or KSR2-BRAF dimerization and BRAF activation. Depending on the cellular context, this pathway mediates diverse biological functions such as cell growth, adhesion, survival and differentiation, predominantly through the regulation of transcription, metabolism and cytoskeletal rearrangements. One target of the MAPK/ERK cascade is peroxisome proliferator-activated receptor gamma (PPARG), a nuclear receptor that promotes differentiation and apoptosis. MAP2K1/MEK1 has been shown to export PPARG from the nucleus. The MAPK/ERK cascade is also involved in the regulation of endosomal dynamics, including lysosome processing and endosome cycling through the perinuclear recycling compartment (PNRC), as well as in the fragmentation of the Golgi apparatus during mitosis. The polypeptide is Dual specificity mitogen-activated protein kinase kinase 1 (MAP2K1) (Pan troglodytes (Chimpanzee)).